Reading from the N-terminus, the 312-residue chain is Ornithine carbamoyltransferase (312 aa).

Carbamoyl phosphate contacts are provided by residues 50–53 (STRT), glutamine 77, arginine 101, and 128–131 (HPCQ). L-ornithine contacts are provided by residues asparagine 160, aspartate 224, and 228–229 (SM). Carbamoyl phosphate-binding positions include 264-265 (CL) and arginine 292.

The protein belongs to the aspartate/ornithine carbamoyltransferase superfamily. OTCase family.

The protein resides in the cytoplasm. The enzyme catalyses carbamoyl phosphate + L-ornithine = L-citrulline + phosphate + H(+). It participates in amino-acid biosynthesis; L-arginine biosynthesis; L-arginine from L-ornithine and carbamoyl phosphate: step 1/3. In terms of biological role, reversibly catalyzes the transfer of the carbamoyl group from carbamoyl phosphate (CP) to the N(epsilon) atom of ornithine (ORN) to produce L-citrulline. The sequence is that of Ornithine carbamoyltransferase from Leifsonia xyli subsp. xyli (strain CTCB07).